Here is a 272-residue protein sequence, read N- to C-terminus: Glutamate racemase (272 aa).

Substrate is bound by residues 16–17 and 48–49; these read DS and YG. C79 functions as the Proton donor/acceptor in the catalytic mechanism. 80–81 contributes to the substrate binding site; sequence NT. C191 serves as the catalytic Proton donor/acceptor. 192–193 is a binding site for substrate; that stretch reads TH.

It belongs to the aspartate/glutamate racemases family.

The catalysed reaction is L-glutamate = D-glutamate. Its pathway is cell wall biogenesis; peptidoglycan biosynthesis. Provides the (R)-glutamate required for cell wall biosynthesis. The polypeptide is Glutamate racemase (Chlorobium phaeobacteroides (strain DSM 266 / SMG 266 / 2430)).